A 411-amino-acid polypeptide reads, in one-letter code: Tyrosine--tRNA ligase (411 aa).

Residues 48-57 (PTAPDIHLGH) carry the 'HIGH' region motif. The 'KMSKS' region signature appears at 232-236 (KMSKS). Lysine 235 lines the ATP pocket. Positions 347-409 (VLLPKVLFSA…GKRRFLKIIF (63 aa)) constitute an S4 RNA-binding domain.

It belongs to the class-I aminoacyl-tRNA synthetase family. TyrS type 2 subfamily. As to quaternary structure, homodimer.

The protein resides in the cytoplasm. It carries out the reaction tRNA(Tyr) + L-tyrosine + ATP = L-tyrosyl-tRNA(Tyr) + AMP + diphosphate + H(+). Catalyzes the attachment of tyrosine to tRNA(Tyr) in a two-step reaction: tyrosine is first activated by ATP to form Tyr-AMP and then transferred to the acceptor end of tRNA(Tyr). The protein is Tyrosine--tRNA ligase of Carboxydothermus hydrogenoformans (strain ATCC BAA-161 / DSM 6008 / Z-2901).